A 425-amino-acid polypeptide reads, in one-letter code: L-cysteine:1D-myo-inositol 2-amino-2-deoxy-alpha-D-glucopyranoside ligase (425 aa).

Cysteine 43 serves as a coordination point for Zn(2+). Residues 43-46 (CGIT), serine 58, and 81-83 (NVT) contribute to the L-cysteinyl-5'-AMP site. The short motif at 45-55 (ITPYDATHMGH) is the 'HIGH' region element. Positions 199–204 (ERGGDP) match the 'ERGGDP' region motif. Tryptophan 240 contributes to the L-cysteinyl-5'-AMP binding site. Cysteine 244 is a binding site for Zn(2+). 262–264 (GSD) serves as a coordination point for L-cysteinyl-5'-AMP. Histidine 269 contributes to the Zn(2+) binding site. Valine 295 is a binding site for L-cysteinyl-5'-AMP. Residues 301–305 (KMSKS) carry the 'KMSKS' region motif.

This sequence belongs to the class-I aminoacyl-tRNA synthetase family. MshC subfamily. As to quaternary structure, monomer. Zn(2+) serves as cofactor.

The catalysed reaction is 1D-myo-inositol 2-amino-2-deoxy-alpha-D-glucopyranoside + L-cysteine + ATP = 1D-myo-inositol 2-(L-cysteinylamino)-2-deoxy-alpha-D-glucopyranoside + AMP + diphosphate + H(+). Functionally, catalyzes the ATP-dependent condensation of GlcN-Ins and L-cysteine to form L-Cys-GlcN-Ins. This Paenarthrobacter aurescens (strain TC1) protein is L-cysteine:1D-myo-inositol 2-amino-2-deoxy-alpha-D-glucopyranoside ligase.